A 432-amino-acid chain; its full sequence is Tol-Pal system protein TolB (432 aa).

An N-terminal signal peptide occupies residues 1–21 (MKKVIYTIVGFVFMWSTSVYA).

This sequence belongs to the TolB family. In terms of assembly, the Tol-Pal system is composed of five core proteins: the inner membrane proteins TolA, TolQ and TolR, the periplasmic protein TolB and the outer membrane protein Pal. They form a network linking the inner and outer membranes and the peptidoglycan layer.

The protein localises to the periplasm. Part of the Tol-Pal system, which plays a role in outer membrane invagination during cell division and is important for maintaining outer membrane integrity. This chain is Tol-Pal system protein TolB, found in Hydrogenovibrio crunogenus (strain DSM 25203 / XCL-2) (Thiomicrospira crunogena).